Reading from the N-terminus, the 197-residue chain is ATP-dependent Clp protease proteolytic subunit (197 aa).

The active-site Nucleophile is serine 102. Histidine 127 is an active-site residue.

It belongs to the peptidase S14 family. Fourteen ClpP subunits assemble into 2 heptameric rings which stack back to back to give a disk-like structure with a central cavity, resembling the structure of eukaryotic proteasomes.

Its subcellular location is the cytoplasm. It catalyses the reaction Hydrolysis of proteins to small peptides in the presence of ATP and magnesium. alpha-casein is the usual test substrate. In the absence of ATP, only oligopeptides shorter than five residues are hydrolyzed (such as succinyl-Leu-Tyr-|-NHMec, and Leu-Tyr-Leu-|-Tyr-Trp, in which cleavage of the -Tyr-|-Leu- and -Tyr-|-Trp bonds also occurs).. Cleaves peptides in various proteins in a process that requires ATP hydrolysis. Has a chymotrypsin-like activity. Plays a major role in the degradation of misfolded proteins. The chain is ATP-dependent Clp protease proteolytic subunit from Borreliella afzelii (strain PKo) (Borrelia afzelii).